We begin with the raw amino-acid sequence, 300 residues long: Regulatory protein NocR (300 aa).

An HTH lysR-type domain is found at 1-59 (MIQSRQLEAFRPVMLTGGMTSAANLVRITQPAISRLIRDLEEEIGISLFERTGNRLRPT). The H-T-H motif DNA-binding region spans 19–38 (MTSAANLVRITQPAISRLIR).

It belongs to the LysR transcriptional regulatory family.

Its function is as follows. Positive regulatory protein for the noc operon involved in nopaline catabolism and uptake. This chain is Regulatory protein NocR (nocR), found in Agrobacterium tumefaciens (strain T37).